The sequence spans 350 residues: tRNA uridine(34) hydroxylase (350 aa).

Residues 146–240 (DDPDALFIDM…YARKAREQGL (95 aa)) enclose the Rhodanese domain. Residue cysteine 200 is the Cysteine persulfide intermediate of the active site.

It belongs to the TrhO family.

The enzyme catalyses uridine(34) in tRNA + AH2 + O2 = 5-hydroxyuridine(34) in tRNA + A + H2O. Functionally, catalyzes oxygen-dependent 5-hydroxyuridine (ho5U) modification at position 34 in tRNAs, the first step in 5-carboxymethoxyuridine (cmo5U) biosynthesis. May be part of an alternate pathway, which is able to bypass cmo5U biogenesis in a subset of tRNAs under aerobic conditions. In Escherichia coli O127:H6 (strain E2348/69 / EPEC), this protein is tRNA uridine(34) hydroxylase.